A 226-amino-acid chain; its full sequence is Orotidine 5'-phosphate decarboxylase (226 aa).

Substrate-binding positions include D9, K31, 58–67 (DLKLYDIPNT), T115, R176, Q184, G204, and R205. K60 serves as the catalytic Proton donor.

It belongs to the OMP decarboxylase family. Type 1 subfamily. Homodimer.

It catalyses the reaction orotidine 5'-phosphate + H(+) = UMP + CO2. Its pathway is pyrimidine metabolism; UMP biosynthesis via de novo pathway; UMP from orotate: step 2/2. Catalyzes the decarboxylation of orotidine 5'-monophosphate (OMP) to uridine 5'-monophosphate (UMP). This is Orotidine 5'-phosphate decarboxylase from Wolbachia pipientis subsp. Culex pipiens (strain wPip).